The chain runs to 120 residues: uncharacterized protein (120 aa).

Positions 90-120 (SLASRGGHMTQSGQCHVSGSLLGRGHKSRGR) are disordered.

This is an uncharacterized protein from Homo sapiens (Human).